The sequence spans 1580 residues: Endoribonuclease Dicer homolog 3 (1580 aa).

Over residues 1–12 (MHSSLEPEKMEE) the composition is skewed to basic and acidic residues. The tract at residues 1–22 (MHSSLEPEKMEEGGGSNSLKRK) is disordered. Positions 51 to 223 (VYEVAKNRNI…SPSNYAAQVS (173 aa)) constitute a Helicase ATP-binding domain. 64–71 (LGTGIDKS) provides a ligand contact to ATP. The DECH box motif lies at 170 to 173 (DECH). In terms of domain architecture, Helicase C-terminal spans 394–562 (KLKELFHLLD…SCPPPVKNGH (169 aa)). Positions 581–597 (EEAASTQTMSDPPSRNE) are enriched in polar residues. Disordered stretches follow at residues 581–601 (EEAA…QLPP) and 613–638 (QSNG…KKRK). The span at 622-633 (SSKSKSSSSAAG) shows a compositional bias: low complexity. Residues 836 to 960 (NLIHFANASS…LPPELLARID (125 aa)) enclose the PAZ domain. RNase III domains follow at residues 985 to 1157 (ASQL…VSGG) and 1198 to 1340 (LIEL…IDTR). Residues Glu1234, Asp1326, and Glu1329 each contribute to the Mg(2+) site.

It belongs to the helicase family. Dicer subfamily. In terms of assembly, interacts with DRB2 and DRB5. Mg(2+) is required as a cofactor. Mn(2+) serves as cofactor.

The protein resides in the nucleus. Its subcellular location is the nucleolus. In terms of biological role, ribonuclease (RNase) III involved in RNA-mediated post-transcriptional gene silencing (PTGS). Involved in the processing of repeat-associated small interfering RNAs (ra-siRNAs, derived from heterochromatin and DNA repeats such as transposons) by cleaving small dsRNAs into 24 nucleotide ra-siRNAs. Plays a role in antiviral RNA silencing. Involved in the production of viral siRNAs derived from the cabbage leaf curl virus (CaLCuV) and tobacco rattle virus (TRV). Targeted by the viral silencing suppressor (VSR) protein 2b of the cucumber mosaic virus (CMV) that inactivates DCL3 function in RNA silencing. Acts redundantly with DICER-LIKE 1 (DCL1) to promote flowering via repression of FLOWERING LOCUS C (FLC). Does not seem to be involved in microRNAs (miRNAs) processing. The polypeptide is Endoribonuclease Dicer homolog 3 (DCL3) (Arabidopsis thaliana (Mouse-ear cress)).